Consider the following 208-residue polypeptide: MAVIEVKHPLIEHKITNIRDVNTDTKSFKENLAEISSLILYEATKQLELQEVEVETPLTKTKAYRLSDSSLAVVPILRAGLGMVDGVMSLIPNARIGHIGVYRDEETLEPKHYYCKLPEDIAKRSVFLVDPMLATGGSAIYAIDYLKSQGVPKVTFLCILAAPEGIKAVTTAHPDVDIFIAKIDERLTEHGYIFPGLGDAGDRVFGTK.

Residues arginine 78, arginine 103, and 130 to 138 (DPMLATGGS) contribute to the 5-phospho-alpha-D-ribose 1-diphosphate site. Residues isoleucine 193 and 198-200 (GDA) contribute to the uracil site. Position 199 (aspartate 199) interacts with 5-phospho-alpha-D-ribose 1-diphosphate.

This sequence belongs to the UPRTase family. It depends on Mg(2+) as a cofactor.

It carries out the reaction UMP + diphosphate = 5-phospho-alpha-D-ribose 1-diphosphate + uracil. The protein operates within pyrimidine metabolism; UMP biosynthesis via salvage pathway; UMP from uracil: step 1/1. Allosterically activated by GTP. Catalyzes the conversion of uracil and 5-phospho-alpha-D-ribose 1-diphosphate (PRPP) to UMP and diphosphate. This chain is Uracil phosphoribosyltransferase, found in Wolinella succinogenes (strain ATCC 29543 / DSM 1740 / CCUG 13145 / JCM 31913 / LMG 7466 / NCTC 11488 / FDC 602W) (Vibrio succinogenes).